Reading from the N-terminus, the 398-residue chain is 1-deoxy-D-xylulose 5-phosphate reductoisomerase (398 aa).

Residues Thr-10, Gly-11, Ser-12, Ile-13, Gly-36, Lys-37, Asn-38, and Asn-124 each coordinate NADPH. A 1-deoxy-D-xylulose 5-phosphate-binding site is contributed by Lys-125. NADPH is bound at residue Glu-126. Asp-150 contacts Mn(2+). 1-deoxy-D-xylulose 5-phosphate is bound by residues Ser-151, Glu-152, Ser-186, and His-209. A Mn(2+)-binding site is contributed by Glu-152. NADPH is bound at residue Gly-215. Ser-222, Asn-227, Lys-228, and Glu-231 together coordinate 1-deoxy-D-xylulose 5-phosphate. Mn(2+) is bound at residue Glu-231.

Belongs to the DXR family. Homodimer. The cofactor is Mg(2+). Mn(2+) is required as a cofactor. Requires Co(2+) as cofactor.

The enzyme catalyses 2-C-methyl-D-erythritol 4-phosphate + NADP(+) = 1-deoxy-D-xylulose 5-phosphate + NADPH + H(+). The protein operates within isoprenoid biosynthesis; isopentenyl diphosphate biosynthesis via DXP pathway; isopentenyl diphosphate from 1-deoxy-D-xylulose 5-phosphate: step 1/6. Its activity is regulated as follows. Inhibited by fosmidomycin. Its function is as follows. Catalyzes the NADPH-dependent rearrangement and reduction of 1-deoxy-D-xylulose-5-phosphate (DXP) to 2-C-methyl-D-erythritol 4-phosphate (MEP). The polypeptide is 1-deoxy-D-xylulose 5-phosphate reductoisomerase (dxr) (Escherichia coli (strain K12)).